The chain runs to 173 residues: Crossover junction endodeoxyribonuclease RuvC (173 aa).

Residues D8, E67, and D139 contribute to the active site. Mg(2+) contacts are provided by D8, E67, and D139.

It belongs to the RuvC family. In terms of assembly, homodimer which binds Holliday junction (HJ) DNA. The HJ becomes 2-fold symmetrical on binding to RuvC with unstacked arms; it has a different conformation from HJ DNA in complex with RuvA. In the full resolvosome a probable DNA-RuvA(4)-RuvB(12)-RuvC(2) complex forms which resolves the HJ. Mg(2+) is required as a cofactor.

The protein resides in the cytoplasm. The enzyme catalyses Endonucleolytic cleavage at a junction such as a reciprocal single-stranded crossover between two homologous DNA duplexes (Holliday junction).. In terms of biological role, the RuvA-RuvB-RuvC complex processes Holliday junction (HJ) DNA during genetic recombination and DNA repair. Endonuclease that resolves HJ intermediates. Cleaves cruciform DNA by making single-stranded nicks across the HJ at symmetrical positions within the homologous arms, yielding a 5'-phosphate and a 3'-hydroxyl group; requires a central core of homology in the junction. The consensus cleavage sequence is 5'-(A/T)TT(C/G)-3'. Cleavage occurs on the 3'-side of the TT dinucleotide at the point of strand exchange. HJ branch migration catalyzed by RuvA-RuvB allows RuvC to scan DNA until it finds its consensus sequence, where it cleaves and resolves the cruciform DNA. In Tolumonas auensis (strain DSM 9187 / NBRC 110442 / TA 4), this protein is Crossover junction endodeoxyribonuclease RuvC.